A 140-amino-acid chain; its full sequence is FAD synthase (140 aa).

ATP is bound by residues 9 to 10, 14 to 17, Asn92, and Tyr119; these read TF and HPGH.

It belongs to the archaeal FAD synthase family. Homodimer. A divalent metal cation serves as cofactor.

The catalysed reaction is FMN + ATP + H(+) = FAD + diphosphate. Its pathway is cofactor biosynthesis; FAD biosynthesis; FAD from FMN: step 1/1. Its function is as follows. Catalyzes the transfer of the AMP portion of ATP to flavin mononucleotide (FMN) to produce flavin adenine dinucleotide (FAD) coenzyme. This Methanocorpusculum labreanum (strain ATCC 43576 / DSM 4855 / Z) protein is FAD synthase.